The following is a 309-amino-acid chain: Formamidopyrimidine-DNA glycosylase (309 aa).

Pro-2 serves as the catalytic Schiff-base intermediate with DNA. The active-site Proton donor is Glu-3. Lys-56 serves as the catalytic Proton donor; for beta-elimination activity. The DNA site is built by His-106 and Arg-129. The FPG-type zinc finger occupies Asn-271–Pro-305. Catalysis depends on Arg-295, which acts as the Proton donor; for delta-elimination activity.

Belongs to the FPG family. Monomer. It depends on Zn(2+) as a cofactor.

It catalyses the reaction Hydrolysis of DNA containing ring-opened 7-methylguanine residues, releasing 2,6-diamino-4-hydroxy-5-(N-methyl)formamidopyrimidine.. The catalysed reaction is 2'-deoxyribonucleotide-(2'-deoxyribose 5'-phosphate)-2'-deoxyribonucleotide-DNA = a 3'-end 2'-deoxyribonucleotide-(2,3-dehydro-2,3-deoxyribose 5'-phosphate)-DNA + a 5'-end 5'-phospho-2'-deoxyribonucleoside-DNA + H(+). In terms of biological role, involved in base excision repair of DNA damaged by oxidation or by mutagenic agents. Acts as a DNA glycosylase that recognizes and removes damaged bases. Has a preference for oxidized purines, such as 7,8-dihydro-8-oxoguanine (8-oxoG). Has AP (apurinic/apyrimidinic) lyase activity and introduces nicks in the DNA strand. Cleaves the DNA backbone by beta-delta elimination to generate a single-strand break at the site of the removed base with both 3'- and 5'-phosphates. This Psychrobacter arcticus (strain DSM 17307 / VKM B-2377 / 273-4) protein is Formamidopyrimidine-DNA glycosylase.